The following is a 303-amino-acid chain: Probable 5-dehydro-4-deoxyglucarate dehydratase (303 aa).

Belongs to the DapA family.

It carries out the reaction 5-dehydro-4-deoxy-D-glucarate + H(+) = 2,5-dioxopentanoate + CO2 + H2O. It functions in the pathway carbohydrate acid metabolism; D-glucarate degradation; 2,5-dioxopentanoate from D-glucarate: step 2/2. The sequence is that of Probable 5-dehydro-4-deoxyglucarate dehydratase from Pseudomonas syringae pv. syringae (strain B728a).